A 249-amino-acid polypeptide reads, in one-letter code: SRR1-like protein (249 aa).

The segment at 1–40 (MAAAALEPWSAVAPRRRKRAAGRRPRPGEGPRAEPEADGE) is disordered. Residues 14 to 25 (PRRRKRAAGRRP) are compositionally biased toward basic residues. Residues 26–40 (RPGEGPRAEPEADGE) are compositionally biased toward basic and acidic residues.

It belongs to the SRR1 family.

It is found in the cytoplasm. Functionally, plays a role in the regulation of heme biosynthesis and in the regulation of the expression of core clock genes. This is SRR1-like protein (Srrd) from Mus musculus (Mouse).